The chain runs to 333 residues: MIYLHNKRKGMLKRLSALIVIGLLMNLPAVFASGGEHAEAAHGDAAHAEAAHGGGAHHDPEKLDAIHHVIDGHEFDFEPFGIVHLPKIEVGGFDISLTRHVVMMWIAAAILLLIMFGVGNQYKKMTKNQAPKGMANLMEVLVDFIRLDVAKQNIGHGYERFMPFLLTIFFFILVCNLIGLVPYSATATGNINVTATLAIFTFLVTQASAIRAHGIGGFLAHLTGGTHPLMWIIMVPVEFIGLFTKPFALTVRLFANMTAGHIVIISLLGLIFVFKTYMIAPVSVAFALFIYLLEILVAFLQAYIFTLLSALFIGMAVAHEDHGDEAHGHAPSH.

Positions M1–A32 are cleaved as a signal peptide. 7 helical membrane passes run H100 to N120, F161 to V181, A185 to T205, L229 to L249, F254 to F274, I279 to F299, and L300 to E320.

This sequence belongs to the ATPase A chain family. F-type ATPases have 2 components, CF(1) - the catalytic core - and CF(0) - the membrane proton channel. CF(1) has five subunits: alpha(3), beta(3), gamma(1), delta(1), epsilon(1). CF(0) has four main subunits: a, b, b' and c.

The protein resides in the cell inner membrane. Its function is as follows. Key component of the proton channel; it plays a direct role in the translocation of protons across the membrane. The chain is ATP synthase subunit a from Chloroherpeton thalassium (strain ATCC 35110 / GB-78).